Reading from the N-terminus, the 596-residue chain is Elongation factor 4 (596 aa).

One can recognise a tr-type G domain in the interval 2 to 184; sequence KHIRNFSIIA…VIVAKIPPPE (183 aa). Residues 14-19 and 131-134 contribute to the GTP site; these read DHGKST and NKID.

It belongs to the TRAFAC class translation factor GTPase superfamily. Classic translation factor GTPase family. LepA subfamily.

It is found in the cell inner membrane. It catalyses the reaction GTP + H2O = GDP + phosphate + H(+). Functionally, required for accurate and efficient protein synthesis under certain stress conditions. May act as a fidelity factor of the translation reaction, by catalyzing a one-codon backward translocation of tRNAs on improperly translocated ribosomes. Back-translocation proceeds from a post-translocation (POST) complex to a pre-translocation (PRE) complex, thus giving elongation factor G a second chance to translocate the tRNAs correctly. Binds to ribosomes in a GTP-dependent manner. The sequence is that of Elongation factor 4 from Shewanella sp. (strain W3-18-1).